Here is a 560-residue protein sequence, read N- to C-terminus: Oxygen-dependent choline dehydrogenase (560 aa).

FAD is bound at residue 6-35; sequence DYIIVGAGSAGCVLADRLSESGDHSVLLLE. The active-site Proton acceptor is the histidine 470.

The protein belongs to the GMC oxidoreductase family. FAD is required as a cofactor.

The enzyme catalyses choline + A = betaine aldehyde + AH2. It carries out the reaction betaine aldehyde + NAD(+) + H2O = glycine betaine + NADH + 2 H(+). The protein operates within amine and polyamine biosynthesis; betaine biosynthesis via choline pathway; betaine aldehyde from choline (cytochrome c reductase route): step 1/1. Its function is as follows. Involved in the biosynthesis of the osmoprotectant glycine betaine. Catalyzes the oxidation of choline to betaine aldehyde and betaine aldehyde to glycine betaine at the same rate. The chain is Oxygen-dependent choline dehydrogenase from Vibrio vulnificus (strain YJ016).